Here is a 119-residue protein sequence, read N- to C-terminus: Putative yippee-like protein Os10g0369500 (119 aa).

The Yippee domain occupies 21-118 (AVLKCRRCRV…LEKARMWKEA (98 aa)). Zn(2+)-binding residues include C25, C28, C81, and C84.

This sequence belongs to the yippee family.

This chain is Putative yippee-like protein Os10g0369500, found in Oryza sativa subsp. japonica (Rice).